We begin with the raw amino-acid sequence, 477 residues long: Cytochrome P450 monooxygenase poxC (477 aa).

Residues 24 to 41 form a helical membrane-spanning segment; the sequence is AWHFAVLSFVYVIARSIY. Cysteine 420 is a heme binding site.

Belongs to the cytochrome P450 family. It depends on heme as a cofactor.

The protein localises to the membrane. It functions in the pathway secondary metabolite biosynthesis. Cytochrome P450 monooxygenase; part of the gene cluster that mediates the biosynthesis of oxaleimides, cytotoxic compounds containing an unusual disubstituted succinimide moiety. The first step of the pathway is provided by the HR-PKS poxF that serves in a new mode of collaborative biosynthesis with the PKS-NRPS poxE, by providing the olefin containing amino acid substrate via the synthesis of an ACP-bound dec-4-enoate. The cytochrome P450 monooxygenase poxM-catalyzed oxidation at the alpha-position creates the enzyme-bound 2-hydroxydec-4-enoyl-ACP thioester, which may be prone to spontaneous hydrolysis to yield 2-hydroxydec-4-enoic acid due to increased electrophilicity of the carbonyl. 2-hydroxydec-4-enoic acid can then be further oxidized by poxM to yield the alpha-ketoacid 2-oxodec-4-enoicacid, which is reductively aminated by the aminotransferase poxL to yield (S,E)-2-aminodec-4-enoic acid. The Hybrid PKS-NRPS synthetase poxE then performs condensation between the octaketide product of its PKS modules and the amino group of (S,E)-2-aminodec-4-enoic acid which is activated and incorporated by the adenylation domain. The resulting aminoacyl product can be cyclized by the Diels-Alderase PoxQ and reductively released by the reductive (R) domain of poxE to yield an aldehyde intermediate. The released aldehyde is then substrate for a Knoevenagel condensation by the hydrolyase poxO followed by an oxidation at the 5-position of the pyrrolidone ring. The presence of the olefin from the amino acid building block allows for migration of the substituted allyl group to occur. This allylic transposition reaction takes place in a conjugate addition, semipinacol-like fashion to yield a succinimide intermediate. Iterative two-electron oxidations of the C7 methyl of the succinimide intermediate to the carboxylic acid can be catalyzed by one of two remaining cytochrome P450 monooxygenasess poxC or poxD to yield oxaleimide A. Subsequent oxidation yields the maleimide scaffold oxaleimide I. Both oxaleimide A and oxaleimide I can undergo oxidative modifications in the decalin ring to yield the series of products oxaleimides B to H. The sequence is that of Cytochrome P450 monooxygenase poxC from Penicillium oxalicum (strain 114-2 / CGMCC 5302) (Penicillium decumbens).